The chain runs to 995 residues: Protein translocase subunit SecA (995 aa).

ATP is bound by residues Gln-86, 104-108 (GEGKT), and Asp-535. A disordered region spans residues 883-911 (AQTVSSDGNGEVVRKPQRRSTPQIGRNEL). The Zn(2+) site is built by Cys-912, Cys-914, Cys-923, and His-924. A disordered region spans residues 939–995 (PSAPPASKALKSTPATQTAVAEEAAKIQAAINSGKLPPTQTTPRGRQAPSVPRGKKR). Over residues 957–969 (AVAEEAAKIQAAI) the composition is skewed to low complexity.

The protein belongs to the SecA family. Monomer and homodimer. Part of the essential Sec protein translocation apparatus which comprises SecA, SecYEG and auxiliary proteins SecDF. Other proteins may also be involved. Zn(2+) is required as a cofactor.

The protein resides in the cell membrane. It localises to the cytoplasm. The catalysed reaction is ATP + H2O + cellular proteinSide 1 = ADP + phosphate + cellular proteinSide 2.. Part of the Sec protein translocase complex. Interacts with the SecYEG preprotein conducting channel. Has a central role in coupling the hydrolysis of ATP to the transfer of proteins into and across the cell membrane, serving as an ATP-driven molecular motor driving the stepwise translocation of polypeptide chains across the membrane. The chain is Protein translocase subunit SecA from Chloroflexus aurantiacus (strain ATCC 29366 / DSM 635 / J-10-fl).